A 335-amino-acid polypeptide reads, in one-letter code: Urokinase plasminogen activator surface receptor (335 aa).

The first 22 residues, 1–22 (MGHPLLLPLLLLLHTCVPASWG), serve as a signal peptide directing secretion. UPAR/Ly6 domains follow at residues 23–114 (LRCM…RSRY), 115–213 (LECI…PQNG), and 214–305 (HQCY…YRKG). 3 disulfide bridges follow: cysteine 25–cysteine 46, cysteine 28–cysteine 34, and cysteine 39–cysteine 67. The N-linked (GlcNAc...) asparagine glycan is linked to asparagine 74. Disulfide bonds link cysteine 93–cysteine 98, cysteine 117–cysteine 144, cysteine 120–cysteine 127, cysteine 137–cysteine 169, cysteine 175–cysteine 192, cysteine 193–cysteine 198, cysteine 216–cysteine 244, cysteine 219–cysteine 227, cysteine 237–cysteine 263, cysteine 269–cysteine 287, and cysteine 288–cysteine 293. 4 N-linked (GlcNAc...) asparagine glycosylation sites follow: asparagine 184, asparagine 194, asparagine 222, and asparagine 255. Glycine 305 carries the GPI-anchor amidated glycine lipid modification. Positions 306–335 (AAPQPGPAHLSLTITLLMTARLWGGTLLWT) are cleaved as a propeptide — removed in mature form.

As to quaternary structure, monomer. Interacts (via the UPAR/Ly6 domains) with SRPX2. Interacts with MRC2. Interacts with FAP (seprase); the interaction occurs at the cell surface of invadopodia membrane. Interacts with SORL1 (via N-terminal ectodomain); this interaction decreases PLAUR internalization. The ternary complex composed of PLAUR-PLAU-SERPINE1 also interacts with SORL1.

Its subcellular location is the cell membrane. The protein localises to the cell projection. The protein resides in the invadopodium membrane. Acts as a receptor for urokinase plasminogen activator. Plays a role in localizing and promoting plasmin formation. Mediates the proteolysis-independent signal transduction activation effects of U-PA. It is subject to negative-feedback regulation by U-PA which cleaves it into an inactive form. This Chlorocebus aethiops (Green monkey) protein is Urokinase plasminogen activator surface receptor (PLAUR).